We begin with the raw amino-acid sequence, 500 residues long: NAD(P)H-quinone oxidoreductase chain 4, chloroplastic (500 aa).

Helical transmembrane passes span 4–24 (FPWLTIIVFLPISAGSLLFFL), 31–51 (LIKWYTICICILELLLTTYAF), 87–107 (IGPILLTGFITTLATLAAWPV), 113–130 (LFHFLMLAMYSGQIGSFS), 134–154 (LLLFFIMWEFELIPVYLLLSM), 167–187 (FILYTAGGSVFLLIGVLGLGL), 208–228 (ALEIIFYIGFLIAFAVKSPII), 242–262 (HYSTCMLLAGILLKMGAYGLV), 272–292 (AHSIFSPWLIIVGTMQIIYAA), 305–325 (IAYSSVSHMGFIIIGIGSITD), 330–350 (GAILQIISHGFIGAALFFLAG), 386–406 (LALPGMSGFVAELIVFFGIIT), 416–436 (ILITFVMAIGMILTPIYSLSM), and 462–482 (LFVSISIFLPVIGIGIYPDFV).

The protein belongs to the complex I subunit 4 family.

It localises to the plastid. It is found in the chloroplast thylakoid membrane. The catalysed reaction is a plastoquinone + NADH + (n+1) H(+)(in) = a plastoquinol + NAD(+) + n H(+)(out). The enzyme catalyses a plastoquinone + NADPH + (n+1) H(+)(in) = a plastoquinol + NADP(+) + n H(+)(out). This chain is NAD(P)H-quinone oxidoreductase chain 4, chloroplastic, found in Gossypium barbadense (Sea Island cotton).